Consider the following 93-residue polypeptide: Beta-defensin 128 (93 aa).

The N-terminal stretch at 1 to 18 is a signal peptide; that stretch reads MKLFLVLIILLFEVLTDG. Disulfide bonds link C24–C52, C32–C46, and C36–C53.

This sequence belongs to the beta-defensin family.

It localises to the secreted. Its function is as follows. Has antibacterial activity. This is Beta-defensin 128 (DEFB128) from Pongo pygmaeus (Bornean orangutan).